Consider the following 293-residue polypeptide: Putative ribose uptake protein RbsU (293 aa).

Helical transmembrane passes span 2–24 (SIVA…TVAS), 34–56 (IIGA…SSGF), 63–80 (LFAL…IITF), 95–117 (TTAF…WPGI), 122–139 (IGFT…MTVW), 154–171 (AVVL…YSAA), 180–202 (LTAF…FMNM), 212–234 (ITWL…LISA), 241–263 (LATG…IYFL), and 273–292 (VITI…TVFI).

It belongs to the GRP transporter (TC 2.A.7.5) family.

The protein localises to the cell membrane. Functionally, could be involved in the uptake of ribose. This chain is Putative ribose uptake protein RbsU (rbsU), found in Staphylococcus aureus (strain Mu50 / ATCC 700699).